A 409-amino-acid polypeptide reads, in one-letter code: CUB domain-containing protein (409 aa).

The signal sequence occupies residues M1 to S18. The span at T154–P229 shows a compositional bias: low complexity. Positions T154–I230 are disordered. C232 and C257 form a disulfide bridge. The CUB domain maps to C232–D338. The tract at residues V389–D409 is disordered. Low complexity predominate over residues A392–D409.

In terms of tissue distribution, component of the acid-insoluble and acid-soluble organic matrix of the aragonitic skeleton (at protein level).

It localises to the secreted. This Acropora millepora (Staghorn coral) protein is CUB domain-containing protein.